The sequence spans 245 residues: MKKNSSDFCFSNERKAQLSEFLENLSIDFNNFDLLNTALSHSSYSNELDQKSDNNERLEFLGDSVLNLIITDHLYKTYPNKSEGELSKARSYIVSEDSLSSIAREIDLGSYILLGRGEESNDGRNKKGILADAIEAFVGAIYLDSGFLIATEFVVGLFDMYIRLMFNRGDFKDYKSLLQEYVQKKYKISPNYKLDKEIGPDHDKVFCVELYVGEKFISNGKGKSKKEAEMRAAEVALKAMEDINL.

The region spanning Leu18–Gly146 is the RNase III domain. Glu59 is a Mg(2+) binding site. Asp63 is a catalytic residue. Mg(2+) is bound by residues Asp132 and Glu135. The active site involves Glu135. The region spanning Asp173 to Asp242 is the DRBM domain.

It belongs to the ribonuclease III family. Homodimer. It depends on Mg(2+) as a cofactor.

The protein resides in the cytoplasm. It catalyses the reaction Endonucleolytic cleavage to 5'-phosphomonoester.. Functionally, digests double-stranded RNA. Involved in the processing of primary rRNA transcript to yield the immediate precursors to the large and small rRNAs (23S and 16S). Processes some mRNAs, and tRNAs when they are encoded in the rRNA operon. Processes pre-crRNA and tracrRNA of type II CRISPR loci if present in the organism. The sequence is that of Ribonuclease 3 from Borreliella afzelii (strain PKo) (Borrelia afzelii).